The sequence spans 78 residues: Large ribosomal subunit protein bL28 (78 aa).

It belongs to the bacterial ribosomal protein bL28 family.

The protein is Large ribosomal subunit protein bL28 of Hydrogenovibrio crunogenus (strain DSM 25203 / XCL-2) (Thiomicrospira crunogena).